The chain runs to 776 residues: Calcium-independent phospholipase A2-gamma (776 aa).

2 stretches are compositionally biased toward basic and acidic residues: residues 226–238 and 307–331; these read RQLQ…EESK and LKSD…ICKD. Disordered stretches follow at residues 226-274 and 306-331; these read RQLQ…EALP and KLKS…ICKD. Positions 439-634 constitute a PNPLA domain; it reads LAIDGGGTRG…LLNNPSALAL (196 aa). The GXGXXG signature appears at 443 to 448; sequence GGGTRG. The helical transmembrane segment at 469–489 threads the bilayer; sequence LFDYICGVSTGAILAFMLGLF. Residues 475–479 carry the GXSXG motif; sequence GVSTG. The active-site Nucleophile is Ser-477. Catalysis depends on Asp-621, which acts as the Proton acceptor. A DGA/G motif is present at residues 621–623; the sequence is DGG. An N6-succinyllysine modification is found at Lys-730.

It is found in the endoplasmic reticulum membrane. Its subcellular location is the microsome membrane. It localises to the mitochondrion membrane. The protein localises to the peroxisome membrane. The catalysed reaction is a 1,2-diacyl-sn-glycero-3-phosphocholine + H2O = a 1-acyl-sn-glycero-3-phosphocholine + a fatty acid + H(+). It carries out the reaction a 1,2-diacyl-sn-glycero-3-phosphocholine + H2O = a 2-acyl-sn-glycero-3-phosphocholine + a fatty acid + H(+). The enzyme catalyses a 1,2-diacyl-sn-glycero-3-phosphoethanolamine + H2O = a 1-acyl-sn-glycero-3-phosphoethanolamine + a fatty acid + H(+). It catalyses the reaction a 1-O-(1Z-alkenyl)-2-acyl-sn-glycero-3-phosphocholine + H2O = a 1-O-(1Z-alkenyl)-sn-glycero-3-phosphocholine + a fatty acid + H(+). The catalysed reaction is a 1-acyl-sn-glycero-3-phosphocholine + H2O = sn-glycerol 3-phosphocholine + a fatty acid + H(+). It carries out the reaction 1-acyl-2-(9Z,12Z)-octadecadienoyl-sn-glycero-3-phosphocholine + H2O = a 1-acyl-sn-glycero-3-phosphocholine + (9Z,12Z)-octadecadienoate + H(+). The enzyme catalyses 1-acyl-2-(5Z,8Z,11Z,14Z-eicosatetraenoyl)-sn-glycero-3-phosphocholine + H2O = a 1-acyl-sn-glycero-3-phosphocholine + (5Z,8Z,11Z,14Z)-eicosatetraenoate + H(+). It catalyses the reaction 1-hexadecanoyl-2-(5Z,8Z,11Z,14Z-eicosatetraenoyl)-sn-glycero-3-phosphocholine + H2O = 1-hexadecanoyl-sn-glycero-3-phosphocholine + (5Z,8Z,11Z,14Z)-eicosatetraenoate + H(+). The catalysed reaction is 1-octadecanoyl-2-(9Z-octadecenoyl)-sn-glycero-3-phosphocholine + H2O = 1-octadecanoyl-sn-glycero-3-phosphocholine + (9Z)-octadecenoate + H(+). It carries out the reaction 1-hexadecanoyl-2-(9Z-octadecenoyl)-sn-glycero-3-phosphocholine + H2O = 1-hexadecanoyl-sn-glycero-3-phosphocholine + (9Z)-octadecenoate + H(+). The enzyme catalyses 1-hexadecanoyl-2-(9Z,12Z-octadecadienoyl)-sn-glycero-3-phosphocholine + H2O = (9Z,12Z)-octadecadienoate + 1-hexadecanoyl-sn-glycero-3-phosphocholine + H(+). It catalyses the reaction 1-acyl-2-(9Z,12Z)-octadecadienoyl-sn-glycero-3-phosphoethanolamine + H2O = a 1-acyl-sn-glycero-3-phosphoethanolamine + (9Z,12Z)-octadecadienoate + H(+). The catalysed reaction is 1-acyl-2-(5Z,8Z,11Z,14Z)-eicosatetraenoyl-sn-glycero-3-phosphoethanolamine + H2O = a 1-acyl-sn-glycero-3-phosphoethanolamine + (5Z,8Z,11Z,14Z)-eicosatetraenoate + H(+). It carries out the reaction 1-hexadecanoyl-2-(5Z,8Z,11Z,14Z-eicosatetraenoyl)-sn-glycero-3-phosphoethanolamine + H2O = 1-hexadecanoyl-sn-glycero-3-phosphoethanolamine + (5Z,8Z,11Z,14Z)-eicosatetraenoate + H(+). The enzyme catalyses 1-hexadecanoyl-2-(5Z,8Z,11Z,14Z-eicosatetraenoyl)-sn-glycero-3-phosphocholine + H2O = 2-(5Z,8Z,11Z,14Z)-eicosatetraenoyl-sn-glycero-3-phosphocholine + hexadecanoate + H(+). It catalyses the reaction 1-octadecanoyl-2-(9Z-octadecenoyl)-sn-glycero-3-phosphocholine + H2O = 2-(9Z-octadecenoyl)-sn-glycero-3-phosphocholine + octadecanoate + H(+). The catalysed reaction is 1-hexadecanoyl-2-(4Z,7Z,10Z,13Z,16Z,19Z-docosahexaenoyl)-sn-glycero-3-phosphocholine + H2O = 2-(4Z,7Z,10Z,13Z,16Z,19Z-docosahexaenoyl)-sn-glycero-3-phosphocholine + hexadecanoate + H(+). It carries out the reaction 1-O-(1Z)-hexadecenyl-2 (5Z,8Z,11Z,14Z)-eicosatetraenoyl-sn-glycero-3-phosphocholine + H2O = 1-(1Z-hexadecenyl)-sn-glycero-3-phosphocholine + (5Z,8Z,11Z,14Z)-eicosatetraenoate + H(+). The enzyme catalyses 1-O-(1Z-hexadecenyl)-2-(9Z-octadecenoyl)-sn-glycero-3-phosphocholine + H2O = 1-(1Z-hexadecenyl)-sn-glycero-3-phosphocholine + (9Z)-octadecenoate + H(+). It catalyses the reaction 1-hexadecanoyl-sn-glycero-3-phosphocholine + H2O = sn-glycerol 3-phosphocholine + hexadecanoate + H(+). The catalysed reaction is 1',3'-bis-[1,2-di-(9Z,12Z-octadecadienoyl)-sn-glycero-3-phospho]-glycerol + H2O = 1'-[1,2-di-(9Z,12Z-octadecadienoyl)-sn-glycero-3-phospho]-3'-[1-(9Z,12Z-octadecadienoyl)-sn-glycero-3-phospho]-glycerol + (9Z,12Z)-octadecadienoate + H(+). It carries out the reaction 1'-[1-acyl-2-(9-hydroxy-(10E,12Z)-octadecadienoyl)-sn-glycero-3-phospho]-3'-[1,2-diacyl-sn-glycero-3-phospho]-glycerol + H2O = 9-hydroxy-(10E,12Z)-octadecadienoate + 1'-[1,2-diacyl-sn-glycero-3-phospho],3'-[1-acyl-sn-glycero-3-phospho]-glycerol + H(+). It participates in phospholipid metabolism. Its activity is regulated as follows. Calcium-independent phospholipase. Functionally, calcium-independent and membrane-bound phospholipase, that catalyzes the esterolytic cleavage of fatty acids from glycerophospholipids to yield free fatty acids and lysophospholipids, hence regulating membrane physical properties and the release of lipid second messengers and growth factors. Hydrolyzes phosphatidylethanolamine, phosphatidylcholine and probably phosphatidylinositol with a possible preference for the former. Has also a broad substrate specificity in terms of fatty acid moieties, hydrolyzing saturated and mono-unsaturated fatty acids at nearly equal rates from either the sn-1 or sn-2 position in diacyl phosphatidylcholine. However, has a weak activity toward polyunsaturated fatty acids at the sn-2 position, and thereby favors the production of 2-arachidonoyl lysophosphatidylcholine, a key branch point metabolite in eicosanoid signaling. On the other hand, can produce arachidonic acid from the sn-1 position of diacyl phospholipid and from the sn-2 position of arachidonate-containing plasmalogen substrates. Therefore, plays an important role in the mobilization of arachidonic acid in response to cellular stimuli and the generation of lipid second messengers. Can also hydrolyze lysophosphatidylcholine. In the mitochondrial compartment, catalyzes the hydrolysis and release of oxidized aliphatic chains from cardiolipin and integrates mitochondrial bioenergetics and signaling. It is essential for maintaining efficient bioenergetic mitochondrial function through tailoring mitochondrial membrane lipid metabolism and composition. The polypeptide is Calcium-independent phospholipase A2-gamma (Rattus norvegicus (Rat)).